The following is a 224-amino-acid chain: Orotate phosphoribosyltransferase (224 aa).

Lysine 29 serves as a coordination point for 5-phospho-alpha-D-ribose 1-diphosphate. 37-38 serves as a coordination point for orotate; it reads FF. Residues 75–76, arginine 105, lysine 106, lysine 109, histidine 111, and 130–138 each bind 5-phospho-alpha-D-ribose 1-diphosphate; these read YK and DDVITAGTS. Positions 134 and 162 each coordinate orotate.

It belongs to the purine/pyrimidine phosphoribosyltransferase family. PyrE subfamily. Homodimer. Mg(2+) serves as cofactor.

The catalysed reaction is orotidine 5'-phosphate + diphosphate = orotate + 5-phospho-alpha-D-ribose 1-diphosphate. It functions in the pathway pyrimidine metabolism; UMP biosynthesis via de novo pathway; UMP from orotate: step 1/2. Its function is as follows. Catalyzes the transfer of a ribosyl phosphate group from 5-phosphoribose 1-diphosphate to orotate, leading to the formation of orotidine monophosphate (OMP). The chain is Orotate phosphoribosyltransferase from Bordetella bronchiseptica (strain ATCC BAA-588 / NCTC 13252 / RB50) (Alcaligenes bronchisepticus).